A 100-amino-acid chain; its full sequence is Urease subunit gamma (100 aa).

It belongs to the urease gamma subunit family. As to quaternary structure, heterotrimer of UreA (gamma), UreB (beta) and UreC (alpha) subunits. Three heterotrimers associate to form the active enzyme.

It is found in the cytoplasm. The catalysed reaction is urea + 2 H2O + H(+) = hydrogencarbonate + 2 NH4(+). Its pathway is nitrogen metabolism; urea degradation; CO(2) and NH(3) from urea (urease route): step 1/1. In Trichormus variabilis (strain ATCC 29413 / PCC 7937) (Anabaena variabilis), this protein is Urease subunit gamma.